The primary structure comprises 346 residues: Elongation factor 1-alpha (346 aa).

One can recognise a tr-type G domain in the interval 1–127 (GTSQADVALL…DNVEPPKRPS (127 aa)). Residue 49-52 (NKMD) coordinates GTP.

Belongs to the TRAFAC class translation factor GTPase superfamily. Classic translation factor GTPase family. EF-Tu/EF-1A subfamily.

The protein localises to the cytoplasm. Functionally, this protein promotes the GTP-dependent binding of aminoacyl-tRNA to the A-site of ribosomes during protein biosynthesis. The polypeptide is Elongation factor 1-alpha (Eimeria bovis).